The chain runs to 196 residues: Peptidyl-tRNA hydrolase (196 aa).

His-15 is a tRNA binding site. The active-site Proton acceptor is the His-20. Residues Tyr-66, Asn-68, and Asn-114 each contribute to the tRNA site.

This sequence belongs to the PTH family. In terms of assembly, monomer.

The protein resides in the cytoplasm. It carries out the reaction an N-acyl-L-alpha-aminoacyl-tRNA + H2O = an N-acyl-L-amino acid + a tRNA + H(+). In terms of biological role, hydrolyzes ribosome-free peptidyl-tRNAs (with 1 or more amino acids incorporated), which drop off the ribosome during protein synthesis, or as a result of ribosome stalling. Catalyzes the release of premature peptidyl moieties from peptidyl-tRNA molecules trapped in stalled 50S ribosomal subunits, and thus maintains levels of free tRNAs and 50S ribosomes. The sequence is that of Peptidyl-tRNA hydrolase from Polynucleobacter asymbioticus (strain DSM 18221 / CIP 109841 / QLW-P1DMWA-1) (Polynucleobacter necessarius subsp. asymbioticus).